The sequence spans 101 residues: Putative antitoxin HigA2 (101 aa).

Positions 35 to 90 (LRELRAAQSLTQVQVAALAHIRQSRVSSIENGDIGSAQVNTLRKYVSALGGELDIT) constitute an HTH cro/C1-type domain. Residues 46 to 65 (QVQVAALAHIRQSRVSSIEN) constitute a DNA-binding region (H-T-H motif).

In terms of biological role, putative antitoxin component of a type II toxin-antitoxin (TA) system. Its cognate toxin would be HigB2. In Mycobacterium tuberculosis (strain ATCC 25618 / H37Rv), this protein is Putative antitoxin HigA2.